The following is a 270-amino-acid chain: Putative phosphoenolpyruvate synthase regulatory protein (270 aa).

Position 150–157 (150–157) interacts with ADP; the sequence is GVSRCGKT.

The protein belongs to the pyruvate, phosphate/water dikinase regulatory protein family. PSRP subfamily.

The enzyme catalyses [pyruvate, water dikinase] + ADP = [pyruvate, water dikinase]-phosphate + AMP + H(+). It carries out the reaction [pyruvate, water dikinase]-phosphate + phosphate + H(+) = [pyruvate, water dikinase] + diphosphate. Functionally, bifunctional serine/threonine kinase and phosphorylase involved in the regulation of the phosphoenolpyruvate synthase (PEPS) by catalyzing its phosphorylation/dephosphorylation. The chain is Putative phosphoenolpyruvate synthase regulatory protein from Shewanella pealeana (strain ATCC 700345 / ANG-SQ1).